The chain runs to 72 residues: Heat-stable enterotoxin ST-IA/ST-P (72 aa).

The first 19 residues, 1–19, serve as a signal peptide directing secretion; sequence MKKLMLAIFISVLSFPSFS. The propeptide occupies 20 to 54; it reads QSTESLDSSKEKITLETKKCDVVKNNSEKKSENMN. 3 disulfide bridges follow: Cys59–Cys64, Cys60–Cys68, and Cys63–Cys71.

This sequence belongs to the heat-stable enterotoxin family.

The protein localises to the secreted. Toxin which activates the particulate form of guanylate cyclase and increases cyclic GMP levels within the host intestinal epithelial cells. This is Heat-stable enterotoxin ST-IA/ST-P (sta1) from Escherichia coli.